Here is a 682-residue protein sequence, read N- to C-terminus: DNA-directed RNA polymerase subunit beta' (682 aa).

Zn(2+) is bound by residues C69, C71, C87, and C90. D489, D491, and D493 together coordinate Mg(2+).

The protein belongs to the RNA polymerase beta' chain family. RpoC1 subfamily. In plastids the minimal PEP RNA polymerase catalytic core is composed of four subunits: alpha, beta, beta', and beta''. When a (nuclear-encoded) sigma factor is associated with the core the holoenzyme is formed, which can initiate transcription. It depends on Mg(2+) as a cofactor. Requires Zn(2+) as cofactor.

Its subcellular location is the plastid. It is found in the chloroplast. The catalysed reaction is RNA(n) + a ribonucleoside 5'-triphosphate = RNA(n+1) + diphosphate. Functionally, DNA-dependent RNA polymerase catalyzes the transcription of DNA into RNA using the four ribonucleoside triphosphates as substrates. The polypeptide is DNA-directed RNA polymerase subunit beta' (Platanus occidentalis (Sycamore)).